Here is a 79-residue protein sequence, read N- to C-terminus: MQLDVFSRMMFGDAAKPTEEKEEEQQEEVSQVSQTNDEETINYMHIMDQIGSIMNSLDQIKPALKELAPMLSAIKKKIM.

The disordered stretch occupies residues methionine 1–aspartate 37.

This is an uncharacterized protein from Bacillus subtilis (strain 168).